We begin with the raw amino-acid sequence, 93 residues long: Small ribosomal subunit protein bS16 (93 aa).

This sequence belongs to the bacterial ribosomal protein bS16 family.

The chain is Small ribosomal subunit protein bS16 from Dictyoglomus turgidum (strain DSM 6724 / Z-1310).